Consider the following 921-residue polypeptide: Isoleucine--tRNA ligase (921 aa).

A 'HIGH' region motif is present at residues 57 to 67; it reads PYANGDIHMGH. Glu-552 is a binding site for L-isoleucyl-5'-AMP. The 'KMSKS' region motif lies at 593–597; it reads KMSKS. Lys-596 is an ATP binding site. 4 residues coordinate Zn(2+): Cys-888, Cys-891, Cys-908, and Cys-911.

It belongs to the class-I aminoacyl-tRNA synthetase family. IleS type 1 subfamily. In terms of assembly, monomer. Zn(2+) is required as a cofactor.

Its subcellular location is the cytoplasm. It catalyses the reaction tRNA(Ile) + L-isoleucine + ATP = L-isoleucyl-tRNA(Ile) + AMP + diphosphate. Functionally, catalyzes the attachment of isoleucine to tRNA(Ile). As IleRS can inadvertently accommodate and process structurally similar amino acids such as valine, to avoid such errors it has two additional distinct tRNA(Ile)-dependent editing activities. One activity is designated as 'pretransfer' editing and involves the hydrolysis of activated Val-AMP. The other activity is designated 'posttransfer' editing and involves deacylation of mischarged Val-tRNA(Ile). The sequence is that of Isoleucine--tRNA ligase from Bacillus cereus (strain AH187).